The sequence spans 424 residues: Myb family transcription factor RLI1 (424 aa).

The disordered stretch occupies residues 144–165 (RPQKRDSGERTPLPPPSQQQHQ). The region spanning 238–298 (APSKTRIRWT…HLQKYRIAKY (61 aa)) is the HTH myb-type domain. Residues 269 to 294 (PKGILKLMNSDGLTIYHIKSHLQKYR) constitute a DNA-binding region (H-T-H motif). The LHEQLE signature appears at 342–347 (LHEQLE). A coiled-coil region spans residues 342–391 (LHEQLEIQRNLQLRIEEQGKRLQKMFEDQLKASRSVMEPQELDDVVAFAA).

The protein belongs to the MYB-CC family. In terms of assembly, homodimer. Interacts with PHR2 in the nucleus. Interacts with SPX1 and SPX2 in the nucleus; these interactions prevent binding to the promoters of target genes, thus regulating negatively leaf inclination in response to phosphate (Pi) starvation.

It localises to the nucleus. Transcription factor binding to specific DNA sequences of target genes promoters, such as the motif R1BS 5'-NAKATNCN-3' and the motif P1BS 5'-GNATATNC-3' to trigger their expression. Nitrate-induced component involved in modulating phosphate (Pi) response and homeostasis together with PHR2; activates directly the expression of Pi starvation-induced (PSI) genes upon nitrate disponibility, thus triggering the nitrate-induced phosphate response (NIPR) promoting Pi uptake activity. Involved in the shoot architecture; positively regulates leaf inclination by affecting lamina joint cell elongation via the direct promotion of ILI4/BU1 and BC1 genes expression, especially in response to phosphate (Pi) availability. Regulates both brassinolide (BL) biosynthesis and signaling by directly activating BL-biosynthesis and signaling genes. The polypeptide is Myb family transcription factor RLI1 (Oryza sativa subsp. indica (Rice)).